An 881-amino-acid chain; its full sequence is Phosphoenolpyruvate carboxylase (881 aa).

Active-site residues include histidine 138 and lysine 545.

This sequence belongs to the PEPCase type 1 family. Requires Mg(2+) as cofactor.

It catalyses the reaction oxaloacetate + phosphate = phosphoenolpyruvate + hydrogencarbonate. Functionally, forms oxaloacetate, a four-carbon dicarboxylic acid source for the tricarboxylic acid cycle. This is Phosphoenolpyruvate carboxylase from Shewanella oneidensis (strain ATCC 700550 / JCM 31522 / CIP 106686 / LMG 19005 / NCIMB 14063 / MR-1).